The following is a 486-amino-acid chain: Cardiolipin synthase A (486 aa).

The next 2 helical transmembrane spans lie at 3 to 23 (TFYT…IAGV) and 38 to 58 (MAWL…YLSV). PLD phosphodiesterase domains follow at residues 219 to 246 (MDLR…VDPR) and 399 to 426 (EGGL…DMRS). Active-site residues include His-224, Lys-226, Asp-231, His-404, Lys-406, and Asp-411.

The protein belongs to the phospholipase D family. Cardiolipin synthase subfamily. ClsA sub-subfamily.

Its subcellular location is the cell inner membrane. It catalyses the reaction 2 a 1,2-diacyl-sn-glycero-3-phospho-(1'-sn-glycerol) = a cardiolipin + glycerol. Catalyzes the reversible phosphatidyl group transfer from one phosphatidylglycerol molecule to another to form cardiolipin (CL) (diphosphatidylglycerol) and glycerol. This is Cardiolipin synthase A from Salmonella paratyphi A (strain ATCC 9150 / SARB42).